A 363-amino-acid chain; its full sequence is Peptide chain release factor 1 (363 aa).

The residue at position 237 (glutamine 237) is an N5-methylglutamine. Over residues 286-295 the composition is skewed to basic and acidic residues; the sequence is EKRRSAEATT. Residues 286 to 305 form a disordered region; it reads EKRRSAEATTRRNLVGSGDR.

This sequence belongs to the prokaryotic/mitochondrial release factor family. In terms of processing, methylated by PrmC. Methylation increases the termination efficiency of RF1.

Its subcellular location is the cytoplasm. Peptide chain release factor 1 directs the termination of translation in response to the peptide chain termination codons UAG and UAA. This Shewanella amazonensis (strain ATCC BAA-1098 / SB2B) protein is Peptide chain release factor 1.